Here is a 195-residue protein sequence, read N- to C-terminus: MALNGPQKTVVQLVGVVVLMGGLAWASVPFYDWFCRVTGFGGVTQVAETGSDQVLDQTIKVRFDASKDRGMPWEFKPVERIMELKIGETGLAFYEAYNPTDRPVAGQASYNVAPFSAGYYFDKIQCFCFNEQVLQPGERVMMPVTFFVDPEIIEDPEAKYVHTITLSYTFHEIDLPEGYAALDTGDTSGAETELN.

At 1–9 the chain is on the cytoplasmic side; that stretch reads MALNGPQKT. A helical; Signal-anchor for type II membrane protein transmembrane segment spans residues 10 to 30; the sequence is VVQLVGVVVLMGGLAWASVPF. The Periplasmic portion of the chain corresponds to 31–195; it reads YDWFCRVTGF…DTSGAETELN (165 aa).

It belongs to the COX11/CtaG family.

Its subcellular location is the cell inner membrane. Its function is as follows. Exerts its effect at some terminal stage of cytochrome c oxidase synthesis, probably by being involved in the insertion of the copper B into subunit I. This chain is Cytochrome c oxidase assembly protein CtaG, found in Ruegeria sp. (strain TM1040) (Silicibacter sp.).